We begin with the raw amino-acid sequence, 929 residues long: Isoleucine--tRNA ligase (929 aa).

The 'HIGH' region motif lies at 58–68 (PYANGDIHIGH). Glutamate 563 provides a ligand contact to L-isoleucyl-5'-AMP. Residues 605-609 (KMSKS) carry the 'KMSKS' region motif. Residue lysine 608 coordinates ATP. 4 residues coordinate Zn(2+): cysteine 892, cysteine 895, cysteine 912, and cysteine 915.

The protein belongs to the class-I aminoacyl-tRNA synthetase family. IleS type 1 subfamily. As to quaternary structure, monomer. It depends on Zn(2+) as a cofactor.

It localises to the cytoplasm. It catalyses the reaction tRNA(Ile) + L-isoleucine + ATP = L-isoleucyl-tRNA(Ile) + AMP + diphosphate. In terms of biological role, catalyzes the attachment of isoleucine to tRNA(Ile). As IleRS can inadvertently accommodate and process structurally similar amino acids such as valine, to avoid such errors it has two additional distinct tRNA(Ile)-dependent editing activities. One activity is designated as 'pretransfer' editing and involves the hydrolysis of activated Val-AMP. The other activity is designated 'posttransfer' editing and involves deacylation of mischarged Val-tRNA(Ile). The protein is Isoleucine--tRNA ligase of Neisseria gonorrhoeae (strain NCCP11945).